Here is a 718-residue protein sequence, read N- to C-terminus: Protein spire homolog 2 (718 aa).

Disordered regions lie at residues 1–22 (MARA…ARPE) and 143–166 (DSSC…EGGP). The segment covering 10–21 (AAPERAGGAARP) has biased composition (low complexity). Residues 26–207 (LSLEEVLKVY…RALFVETLEL (182 aa)) enclose the KIND domain. WH2 domains follow at residues 251–265 (QLMR…LKKV), 281–299 (PFEM…LRKV), and 345–362 (LHEK…LRPV). Ser-374 bears the Phosphoserine mark. The segment at 397–434 (TDTGSGSQRPRPRVLLKAPTLAEMEEMNTSEEEESPCG) is disordered. The span at 419-432 (EMEEMNTSEEEESP) shows a compositional bias: acidic residues. Residues Ser-443, Ser-445, and Ser-479 each carry the phosphoserine modification. The tract at residues 456–518 (MASGLQSAAQ…SSLSSVDGPE (63 aa)) is disordered. A compositionally biased stretch (low complexity) spans 496–513 (SGQSQPLPSSALPSSLSS). Residues 538–558 (LALTVEEVVDVRRVLVKAEME) are spir-box.

The protein belongs to the spire family. Detected in oocytes.

Its subcellular location is the cytoplasm. The protein resides in the cytoskeleton. It localises to the cytosol. It is found in the cell membrane. The protein localises to the cytoplasmic vesicle membrane. Its function is as follows. Acts as an actin nucleation factor, remains associated with the slow-growing pointed end of the new filament. Involved in intracellular vesicle transport along actin fibers, providing a novel link between actin cytoskeleton dynamics and intracellular transport. Required for asymmetric spindle positioning and asymmetric cell division during oocyte meiosis. Required for normal formation of the cleavage furrow and for polar body extrusion during female germ cell meiosis. Also acts in the nucleus: together with SPIRE1 and SPIRE2, promotes assembly of nuclear actin filaments in response to DNA damage in order to facilitate movement of chromatin and repair factors after DNA damage. The protein is Protein spire homolog 2 (Spire2) of Mus musculus (Mouse).